The sequence spans 464 residues: Trehalose-6-phosphate synthase (464 aa).

Arginine 10 contributes to the D-glucose 6-phosphate binding site. 23–24 (GG) contributes to the UDP-alpha-D-glucose binding site. Residues tyrosine 81 and aspartate 135 each coordinate D-glucose 6-phosphate. UDP-alpha-D-glucose is bound by residues arginine 268 and lysine 273. Arginine 306 lines the D-glucose 6-phosphate pocket. Position 371-375 (371-375 (LVAKE)) interacts with UDP-alpha-D-glucose.

This sequence belongs to the glycosyltransferase 20 family. As to quaternary structure, homotetramer.

It carries out the reaction D-glucose 6-phosphate + UDP-alpha-D-glucose = alpha,alpha-trehalose 6-phosphate + UDP + H(+). It functions in the pathway glycan biosynthesis; trehalose biosynthesis. Functionally, probably involved in the osmoprotection via the biosynthesis of trehalose. Catalyzes the transfer of glucose from UDP-alpha-D-glucose (UDP-Glc) to D-glucose 6-phosphate (Glc-6-P) to form trehalose-6-phosphate. Acts with retention of the anomeric configuration of the UDP-sugar donor. The polypeptide is Trehalose-6-phosphate synthase (Sinorhizobium fredii (strain NBRC 101917 / NGR234)).